The sequence spans 122 residues: UPF0382 membrane protein SERP0230 (122 aa).

The next 4 membrane-spanning stretches (helical) occupy residues 3–23 (VFII…AFGA), 46–66 (MYHG…SINV), 69–89 (AGWL…FLAL), and 98–118 (ITPI…IATL).

This sequence belongs to the UPF0382 family.

Its subcellular location is the cell membrane. The protein is UPF0382 membrane protein SERP0230 of Staphylococcus epidermidis (strain ATCC 35984 / DSM 28319 / BCRC 17069 / CCUG 31568 / BM 3577 / RP62A).